Consider the following 163-residue polypeptide: Nucleotide-binding protein Clos_1967 (163 aa).

The protein belongs to the YajQ family.

Its function is as follows. Nucleotide-binding protein. This is Nucleotide-binding protein Clos_1967 from Alkaliphilus oremlandii (strain OhILAs) (Clostridium oremlandii (strain OhILAs)).